The primary structure comprises 184 residues: Ribosome maturation factor RimP (184 aa).

This sequence belongs to the RimP family.

It is found in the cytoplasm. In terms of biological role, required for maturation of 30S ribosomal subunits. The polypeptide is Ribosome maturation factor RimP (Corynebacterium diphtheriae (strain ATCC 700971 / NCTC 13129 / Biotype gravis)).